The primary structure comprises 394 residues: S-adenosylmethionine synthase (394 aa).

His18 is an ATP binding site. Residue Asp20 participates in Mg(2+) binding. Position 46 (Glu46) interacts with K(+). Positions 59 and 104 each coordinate L-methionine. The interval 104-114 (QSPDIAQGVDA) is flexible loop. ATP is bound by residues 174–176 (DCK), 240–241 (KF), Asp249, 255–256 (RK), Ala272, and Lys276. Asp249 lines the L-methionine pocket. An L-methionine-binding site is contributed by Lys280.

The protein belongs to the AdoMet synthase family. Homotetramer; dimer of dimers. The cofactor is Mg(2+). It depends on K(+) as a cofactor.

It is found in the cytoplasm. The catalysed reaction is L-methionine + ATP + H2O = S-adenosyl-L-methionine + phosphate + diphosphate. It functions in the pathway amino-acid biosynthesis; S-adenosyl-L-methionine biosynthesis; S-adenosyl-L-methionine from L-methionine: step 1/1. In terms of biological role, catalyzes the formation of S-adenosylmethionine (AdoMet) from methionine and ATP. The overall synthetic reaction is composed of two sequential steps, AdoMet formation and the subsequent tripolyphosphate hydrolysis which occurs prior to release of AdoMet from the enzyme. The sequence is that of S-adenosylmethionine synthase from Akkermansia muciniphila (strain ATCC BAA-835 / DSM 22959 / JCM 33894 / BCRC 81048 / CCUG 64013 / CIP 107961 / Muc).